Reading from the N-terminus, the 345-residue chain is Phosphoribosylformylglycinamidine cyclo-ligase (345 aa).

This sequence belongs to the AIR synthase family.

It is found in the cytoplasm. It carries out the reaction 2-formamido-N(1)-(5-O-phospho-beta-D-ribosyl)acetamidine + ATP = 5-amino-1-(5-phospho-beta-D-ribosyl)imidazole + ADP + phosphate + H(+). It participates in purine metabolism; IMP biosynthesis via de novo pathway; 5-amino-1-(5-phospho-D-ribosyl)imidazole from N(2)-formyl-N(1)-(5-phospho-D-ribosyl)glycinamide: step 2/2. The sequence is that of Phosphoribosylformylglycinamidine cyclo-ligase from Methylococcus capsulatus (strain ATCC 33009 / NCIMB 11132 / Bath).